Reading from the N-terminus, the 254-residue chain is MYQPLLLLPLLLTSAFANPHDPHIHHSLEKRASFPIPSSKGSVTFSSPKTISGTFDGGMKTYGRGVKCTGQDEGGDEDAVFILKDGATLKNAIIGADQIEGVHCEGSCTIENVWWTDVCEDALSLKGSGSGTHKIIGGGARNADDKVIQHNSGGKVIIQDFTVQNFGKLYRACGNCKKQFKRTVKISGVKASSGKALVGINSNYGDTASIKGCATSVKEICVEYEGTNNNSKEPKKKSSGPSSYCKYSEPLSKC.

The first 17 residues, 1–17 (MYQPLLLLPLLLTSAFA), serve as a signal peptide directing secretion. The tract at residues 227 to 254 (TNNNSKEPKKKSSGPSSYCKYSEPLSKC) is disordered. Residue Asn229 is glycosylated (N-linked (GlcNAc...) asparagine). Residues 239-254 (SGPSSYCKYSEPLSKC) show a composition bias toward low complexity.

Belongs to the polysaccharide lyase 3 family. It depends on Ca(2+) as a cofactor.

Its subcellular location is the secreted. It carries out the reaction Eliminative cleavage of (1-&gt;4)-alpha-D-galacturonan to give oligosaccharides with 4-deoxy-alpha-D-galact-4-enuronosyl groups at their non-reducing ends.. Functionally, pectinolytic enzyme consist of four classes of enzymes: pectin lyase, polygalacturonase, pectin methylesterase and rhamnogalacturonase. Among pectinolytic enzymes, pectin lyase is the most important in depolymerization of pectin, since it cleaves internal glycosidic bonds of highly methylated pectins. Favors pectate, the anion, over pectin, the methyl ester. In Emericella nidulans (strain FGSC A4 / ATCC 38163 / CBS 112.46 / NRRL 194 / M139) (Aspergillus nidulans), this protein is Pectate lyase E (plyE).